The sequence spans 569 residues: Glutamate--tRNA ligase (569 aa).

A 'HIGH' region motif is present at residues 110–120 (PNPNGPPTLGS).

Belongs to the class-I aminoacyl-tRNA synthetase family. Glutamate--tRNA ligase type 2 subfamily.

Its subcellular location is the cytoplasm. The catalysed reaction is tRNA(Glu) + L-glutamate + ATP = L-glutamyl-tRNA(Glu) + AMP + diphosphate. Functionally, catalyzes the attachment of glutamate to tRNA(Glu) in a two-step reaction: glutamate is first activated by ATP to form Glu-AMP and then transferred to the acceptor end of tRNA(Glu). The sequence is that of Glutamate--tRNA ligase from Methanococcoides burtonii (strain DSM 6242 / NBRC 107633 / OCM 468 / ACE-M).